The chain runs to 1661 residues: Beta/gamma crystallin domain-containing protein 2 (1661 aa).

8 disordered regions span residues Glu72 to Val135, Pro148 to Ser168, Val242 to Ser268, Pro297 to Pro321, Ser337 to Gly380, Glu411 to Glu757, Leu808 to Ser871, and Thr883 to Arg903. Over residues Pro105–Val118 the composition is skewed to basic and acidic residues. A compositionally biased stretch (polar residues) spans Ser337 to Ser353. Positions Pro431–Pro442 are enriched in low complexity. 3 stretches are compositionally biased toward polar residues: residues Ser507 to Ser519, Pro628 to Gln644, and Ser685 to Glu697. Residues Pro706–Pro719 are compositionally biased toward low complexity. The segment covering Glu731 to Glu750 has biased composition (polar residues). The span at Glu825–Glu835 shows a compositional bias: acidic residues. Over residues Asp841–Lys851 the composition is skewed to basic and acidic residues. Beta/gamma crystallin 'Greek key' domains follow at residues Gly986–Arg1023, Gly1024–Val1067, Pro1073–Ala1113, Gly1114–Arg1156, Pro1168–Gly1213, Gly1214–Arg1256, Pro1262–Ser1302, Gly1303–Leu1345, Ser1356–Gly1393, Gly1394–Ser1437, Pro1443–Gly1483, and Gly1484–Lys1525. In terms of domain architecture, Ricin B-type lectin spans Trp1569–His1659.

Belongs to the beta/gamma-crystallin family.

In Homo sapiens (Human), this protein is Beta/gamma crystallin domain-containing protein 2.